The primary structure comprises 566 residues: MEIIFGRNKKEQLEPLRATVTGSIPAWLQGTLLRNGPGMHTVGDSKYNHWFDGLALLHSFSIRDGEVFYRSKYLQSDTYNANIEANRIVVSEFGTMAYPDPCKNIFSKAFSYLSHTIPDFTDNCLINIMKCGEDFYATTETNYIRKIDPQTLETLEKVDYRKYVAVNLATSHPHYDEAGNVLNMGTSIADKGGTKYVMFKIPATAPGSKKKGKNPLKHSEVFCSIPSRSLLSPSYYHSFGVTENYVVFLEQPFKLDILKMATAYMRGVSWASCMTFCKEDKTYIHIIDQKTRKPVPTKFYTDPMVVFHHVNAYEEDGCVLFDVIAYEDNSLYQLFYLANLNKDFEEKSRLTSVPTLRRFAVPLHVDKDAEVGSNLVKVSSTTATALKEKDDHVYCQPEVLYEGLELPRINYAHNGKPYRYIFAAEVQWSPVPTKILKYDVLTKSSLKWSEESCWPAEPLFVPTPGAKDEDDGVILSAIISTDPQKLPFLLILDAKSFTELARASVDVDMHLDLHGLFIPDAGWNAVKQTPAKTQEDENSDHPTGLTAPGLGHGENDFTAGHGGKSL.

His-172, His-237, His-308, and His-514 together coordinate Fe cation. Residues 529 to 566 (TPAKTQEDENSDHPTGLTAPGLGHGENDFTAGHGGKSL) form a disordered region.

It belongs to the carotenoid oxygenase family. The cofactor is Fe(2+).

It is found in the cytoplasm. It localises to the cytosol. It carries out the reaction all-trans-beta-carotene + O2 = 2 all-trans-retinal. Its pathway is cofactor metabolism; retinol metabolism. In terms of biological role, symmetrically cleaves beta-carotene into two molecules of retinal using a dioxygenase mechanism. This chain is Beta,beta-carotene 15,15'-dioxygenase, found in Rattus norvegicus (Rat).